Consider the following 319-residue polypeptide: Vesicle-associated membrane protein-associated protein scs22 (319 aa).

Positions 1 to 121 (MALECDSTIV…SERKIRCVYS (121 aa)) constitute an MSP domain. Topologically, residues 1 to 298 (MALECDSTIV…GAKVVPQIHN (298 aa)) are cytoplasmic. Positions 127–150 (ANAHANAHHQPAQTTTTSIPTSAT) are enriched in low complexity. The tract at residues 127–244 (ANAHANAHHQ…TTSPNNENNA (118 aa)) is disordered. 3 stretches are compositionally biased toward polar residues: residues 151-165 (DNYT…QSYS), 185-201 (STAT…SAVS), and 231-244 (SVPT…ENNA). T236 is modified (phosphothreonine). Phosphoserine occurs at positions 237 and 281. The helical; Anchor for type IV membrane protein transmembrane segment at 299–319 (TVTVQTAFLLAIICFLIGLLF) threads the bilayer.

This sequence belongs to the VAMP-associated protein (VAP) (TC 9.B.17) family. In terms of assembly, interacts with epr1.

It localises to the endoplasmic reticulum membrane. In terms of biological role, vesicle-associated membrane protein-associated protein (VAP) implicated in maintaining the cortical endoplasmic reticulum (ER)-plasma membrane (PM) attachment. ER-PM contacts function to modulate the distribution of contractile ring components to ensure robust ring assembly. ER-PM contacts function also in controlling exocytosis and maintenance of cell polarity regulating cell shape. VAPs play an important role in regulating eisosome assembly. VAPs also contribute to ER-phagy by tethering atg8 to the ER membrane, but also by maintaining the ER-plasma membrane contact. The polypeptide is Vesicle-associated membrane protein-associated protein scs22 (scs22) (Schizosaccharomyces pombe (strain 972 / ATCC 24843) (Fission yeast)).